The chain runs to 218 residues: Ras-related protein Rab11D (218 aa).

20 to 27 (GDSGVGKS) provides a ligand contact to GTP. Positions 42–50 (SKSTIGVEF) match the Effector region motif. Residues 68–72 (DTAGQ) and 126–129 (NKSD) each bind GTP. Residues cysteine 215 and cysteine 216 are each lipidated (S-geranylgeranyl cysteine).

It belongs to the small GTPase superfamily. Rab family.

The protein localises to the cell membrane. This is Ras-related protein Rab11D (RAB11D) from Lotus japonicus (Lotus corniculatus var. japonicus).